A 234-amino-acid chain; its full sequence is L-cystine transport system permease protein TcyB (234 aa).

Transmembrane regions (helical) follow at residues 8 to 28 (ALTLGTAIPWDLVQQSFWPIL), 36 to 56 (IPLTILSFIFGMILALITALA), 78 to 98 (TPLLVQLFIIFYLFPAFNVTL), 100 to 120 (PFPSAVIAFSLNVGAYASEII), and 199 to 219 (ILVIYIEAAFIYWIICFLLSL). Residues 32–221 (IYYTIPLTIL…IICFLLSLVQ (190 aa)) form the ABC transmembrane type-1 domain.

It belongs to the binding-protein-dependent transport system permease family. In terms of assembly, the complex is composed of two ATP-binding proteins (TcyC), two transmembrane proteins (TcyB) and a solute-binding protein (TcyA).

It is found in the cell membrane. Part of the ABC transporter complex TcyABC involved in L-cystine import. Probably responsible for the translocation of the substrate across the membrane. This Bacillus subtilis (strain 168) protein is L-cystine transport system permease protein TcyB (tcyB).